The sequence spans 226 residues: SPI-1 type 3 secretion system stator protein (226 aa).

The core secretion machinery of the T3SS is composed of approximately 20 different proteins, including cytoplasmic components, a base, an export apparatus and a needle. This subunit is part of the cytosolic complex. Interacts directly with InvC/SctN1 (T3SS-1 ATPase) and SpaO/SctQ (the major sorting platform component).

Its subcellular location is the cytoplasm. In terms of biological role, component of the type III secretion system (T3SS), also called injectisome, which is used to inject bacterial effector proteins into eukaryotic host cells. Acts as a regulator of the InvC/SctN1 ATPase activity. Required for invasion and secretion. The chain is SPI-1 type 3 secretion system stator protein from Salmonella typhimurium (strain SL1344).